The sequence spans 90 residues: Small ribosomal subunit protein bS16 (90 aa).

The protein belongs to the bacterial ribosomal protein bS16 family.

In Bacillus velezensis (strain DSM 23117 / BGSC 10A6 / LMG 26770 / FZB42) (Bacillus amyloliquefaciens subsp. plantarum), this protein is Small ribosomal subunit protein bS16.